The chain runs to 184 residues: UPF0149 protein PSEEN5316 (184 aa).

The protein belongs to the UPF0149 family.

This chain is UPF0149 protein PSEEN5316, found in Pseudomonas entomophila (strain L48).